A 261-amino-acid chain; its full sequence is tRNA pseudouridine synthase A (261 aa).

D51 acts as the Nucleophile in catalysis. Y109 provides a ligand contact to substrate.

This sequence belongs to the tRNA pseudouridine synthase TruA family. Homodimer.

It carries out the reaction uridine(38/39/40) in tRNA = pseudouridine(38/39/40) in tRNA. In terms of biological role, formation of pseudouridine at positions 38, 39 and 40 in the anticodon stem and loop of transfer RNAs. The protein is tRNA pseudouridine synthase A of Shewanella denitrificans (strain OS217 / ATCC BAA-1090 / DSM 15013).